A 503-amino-acid polypeptide reads, in one-letter code: ATP synthase subunit alpha (503 aa).

169 to 176 (GDRKTGKT) serves as a coordination point for ATP.

The protein belongs to the ATPase alpha/beta chains family. As to quaternary structure, F-type ATPases have 2 components, CF(1) - the catalytic core - and CF(0) - the membrane proton channel. CF(1) has five subunits: alpha(3), beta(3), gamma(1), delta(1), epsilon(1). CF(0) has three main subunits: a(1), b(2) and c(9-12). The alpha and beta chains form an alternating ring which encloses part of the gamma chain. CF(1) is attached to CF(0) by a central stalk formed by the gamma and epsilon chains, while a peripheral stalk is formed by the delta and b chains.

The protein resides in the cell membrane. It catalyses the reaction ATP + H2O + 4 H(+)(in) = ADP + phosphate + 5 H(+)(out). Its function is as follows. Produces ATP from ADP in the presence of a proton gradient across the membrane. The alpha chain is a regulatory subunit. The protein is ATP synthase subunit alpha of Lactobacillus johnsonii (strain CNCM I-12250 / La1 / NCC 533).